A 209-amino-acid polypeptide reads, in one-letter code: Large ribosomal subunit protein uL3 (209 aa).

The protein belongs to the universal ribosomal protein uL3 family. Part of the 50S ribosomal subunit. Forms a cluster with proteins L14 and L19.

One of the primary rRNA binding proteins, it binds directly near the 3'-end of the 23S rRNA, where it nucleates assembly of the 50S subunit. This Pelobacter propionicus (strain DSM 2379 / NBRC 103807 / OttBd1) protein is Large ribosomal subunit protein uL3.